A 234-amino-acid polypeptide reads, in one-letter code: NLP effector protein 1 (234 aa).

Positions 1–18 (MQLRAFISVFASLACVNA) are cleaved as a signal peptide. N-linked (GlcNAc...) asparagine glycosylation is present at Asn-66. A Conserved undecapeptide motif I motif is present at residues 102–112 (AFMYSWYMPKD). The short motif at 119–125 (GHRHDWE) is the Hepta-peptide GHRHDWE motif II element.

It belongs to the Necrosis inducing protein (NPP1) family.

The protein resides in the secreted. Functionally, secreted effector that contributes to virulence during infection by P.capsici. Induces distinct chlorosis at 3 days after inoculation of host C.annuum leaves, and all the chlorotic areas gradually turn brown and become moderately necrotic at 7 days after inoculation. Leads only to chlorotic areas, without necrosis at 7 days after non-host N.benthamiana leaves infection. Induces cell death in hot pepper. This Phytophthora capsici protein is NLP effector protein 1.